The chain runs to 155 residues: Protein SprT-like (155 aa).

The region spanning 7–145 is the SprT-like domain; sequence QRHMEEVSLQ…GSCGGKLIQT (139 aa). Histidine 67 provides a ligand contact to Zn(2+). The active site involves glutamate 68. Histidine 71 contributes to the Zn(2+) binding site.

Belongs to the SprT family. Zn(2+) serves as cofactor.

Its subcellular location is the cytoplasm. In Listeria monocytogenes serotype 4b (strain CLIP80459), this protein is Protein SprT-like.